The following is a 189-amino-acid chain: Recombination protein RecR (189 aa).

The segment at 48–63 (CQTCFHLSAEPTCEIC) adopts a C4-type zinc-finger fold. One can recognise a Toprim domain in the interval 71-165 (GMLCVVADSR…EVSRIAYGLP (95 aa)).

This sequence belongs to the RecR family.

May play a role in DNA repair. It seems to be involved in an RecBC-independent recombinational process of DNA repair. It may act with RecF and RecO. The polypeptide is Recombination protein RecR (Synechococcus sp. (strain CC9311)).